The sequence spans 77 residues: uncharacterized protein (77 aa).

A run of 2 helical transmembrane segments spans residues Val-22–Gly-42 and Leu-44–Gly-64.

It is found in the cell membrane. This is an uncharacterized protein from Methanocaldococcus jannaschii (strain ATCC 43067 / DSM 2661 / JAL-1 / JCM 10045 / NBRC 100440) (Methanococcus jannaschii).